The chain runs to 68 residues: Large ribosomal subunit protein bL33c (68 aa).

The protein belongs to the bacterial ribosomal protein bL33 family.

It localises to the plastid. This chain is Large ribosomal subunit protein bL33c, found in Cuscuta exaltata (Tall dodder).